The chain runs to 181 residues: Large ribosomal subunit protein uL5 (181 aa).

Belongs to the universal ribosomal protein uL5 family. In terms of assembly, part of the 50S ribosomal subunit; part of the 5S rRNA/L5/L18/L25 subcomplex. Contacts the 5S rRNA and the P site tRNA. Forms a bridge to the 30S subunit in the 70S ribosome.

Its function is as follows. This is one of the proteins that bind and probably mediate the attachment of the 5S RNA into the large ribosomal subunit, where it forms part of the central protuberance. In the 70S ribosome it contacts protein S13 of the 30S subunit (bridge B1b), connecting the 2 subunits; this bridge is implicated in subunit movement. Contacts the P site tRNA; the 5S rRNA and some of its associated proteins might help stabilize positioning of ribosome-bound tRNAs. The protein is Large ribosomal subunit protein uL5 of Rickettsia canadensis (strain McKiel).